The following is a 232-amino-acid chain: Eukaryotic translation initiation factor NCBP (232 aa).

Over residues 1 to 11 the composition is skewed to basic and acidic residues; the sequence is MEPAVERKVPE. Residues 1-49 are disordered; sequence MEPAVERKVPEQEEQLQPSHARAEDAPPAAVEEEDEAEAEESERRNREL. Positions 31–41 are enriched in acidic residues; it reads VEEEDEAEAEE.

Belongs to the eukaryotic initiation factor 4E family. As to quaternary structure, EIF4F is a multi-subunit complex, the composition of which varies with external and internal environmental conditions. It is composed of at least EIF4A, EIF4E and EIF4G. EIF4E is also known to interact with other partners. In higher plants two isoforms of EIF4F have been identified, named isoform EIF4F and isoform EIF(iso)4F. Isoform EIF4F has subunits p220 and p26, whereas isoform EIF(iso)4F has subunits p82 and p28.

Recognizes and binds the 7-methylguanosine-containing mRNA cap during an early step in the initiation of protein synthesis and facilitates ribosome binding by inducing the unwinding of the mRNAs secondary structures. The sequence is that of Eukaryotic translation initiation factor NCBP (NCBP) from Triticum aestivum (Wheat).